Reading from the N-terminus, the 341-residue chain is HTH-type transcriptional repressor PurR (341 aa).

The HTH lacI-type domain occupies 2–56 (ATIKDVAKRAGVSTTTVSHVINKTRFVAEETKAAVGAAIKELHYSPSAVARSLKV). A DNA-binding region (H-T-H motif) is located at residues 4–23 (IKDVAKRAGVSTTTVSHVIN). The DNA-binding element occupies 48–56 (SAVARSLKV). Hypoxanthine is bound by residues Tyr-73, Arg-190, Thr-192, Phe-221, and Asp-275.

In terms of assembly, homodimer.

Its pathway is purine metabolism; purine nucleotide biosynthesis [regulation]. Is the main repressor of the genes involved in the de novo synthesis of purine nucleotides, regulating purB, purC, purEK, purF, purHD, purL, purMN and guaBA expression. PurR is allosterically activated to bind its cognate DNA by binding the purine corepressors, hypoxanthine or guanine, thereby effecting transcription repression. The polypeptide is HTH-type transcriptional repressor PurR (Serratia proteamaculans (strain 568)).